Here is a 365-residue protein sequence, read N- to C-terminus: Aspartate-semialdehyde dehydrogenase (365 aa).

Residues T13, G14, S15, V16, S38, S41, L85, and D86 each coordinate NADP(+). Position 13 is a phosphothreonine (T13). The active-site Acyl-thioester intermediate is the C156. G188 is a binding site for NADP(+). The active-site Proton acceptor is H256. S318 and S323 each carry phosphoserine. Residue N343 coordinates NADP(+).

This sequence belongs to the aspartate-semialdehyde dehydrogenase family. Homotetramer.

It localises to the cytoplasm. The protein resides in the cytosol. The protein localises to the nucleus. It catalyses the reaction L-aspartate 4-semialdehyde + phosphate + NADP(+) = 4-phospho-L-aspartate + NADPH + H(+). It functions in the pathway amino-acid biosynthesis; L-methionine biosynthesis via de novo pathway; L-homoserine from L-aspartate: step 2/3. It participates in amino-acid biosynthesis; L-threonine biosynthesis; L-threonine from L-aspartate: step 2/5. Catalyzes the NADPH-dependent formation of L-aspartate 4-semialdehyde (L-ASA) by the reductive dephosphorylation of 4-phospho-L-aspartate. Mediates the second step in the biosynthesis of amino acids that derive from aspartate (the aspartate family of amino acids), including methioinine and threonine, the latter of which is a precursor to isoleucine. The sequence is that of Aspartate-semialdehyde dehydrogenase (HOM2) from Saccharomyces cerevisiae (strain ATCC 204508 / S288c) (Baker's yeast).